Here is a 204-residue protein sequence, read N- to C-terminus: FMN-dependent NADH:quinone oxidoreductase 1 (204 aa).

FMN contacts are provided by residues Ser14, 20-22, and 99-102; these read SMS and MYNF.

The protein belongs to the azoreductase type 1 family. As to quaternary structure, homodimer. It depends on FMN as a cofactor.

It carries out the reaction 2 a quinone + NADH + H(+) = 2 a 1,4-benzosemiquinone + NAD(+). The catalysed reaction is N,N-dimethyl-1,4-phenylenediamine + anthranilate + 2 NAD(+) = 2-(4-dimethylaminophenyl)diazenylbenzoate + 2 NADH + 2 H(+). Its function is as follows. Quinone reductase that provides resistance to thiol-specific stress caused by electrophilic quinones. Also exhibits azoreductase activity. Catalyzes the reductive cleavage of the azo bond in aromatic azo compounds to the corresponding amines. The polypeptide is FMN-dependent NADH:quinone oxidoreductase 1 (Hahella chejuensis (strain KCTC 2396)).